The sequence spans 455 residues: F-box/LRR-repeat protein At5g35995 (455 aa).

Residues R4 to E51 form the F-box domain. 5 LRR repeats span residues D114–T138, F152–G176, I282–M305, F308–W324, and Q325–K348.

The polypeptide is F-box/LRR-repeat protein At5g35995 (Arabidopsis thaliana (Mouse-ear cress)).